The primary structure comprises 784 residues: Ubiquitin carboxyl-terminal hydrolase 1 (784 aa).

2 disordered regions span residues 1–21 and 33–54; these read MPGVIPSESNGLSRGSPSKKN and TKRALDFTDSQEDEEKASEYRG. Positions 7–16 are enriched in polar residues; it reads SESNGLSRGS. Phosphoserine is present on residues Ser-16, Ser-42, and Ser-67. In terms of domain architecture, USP spans 81–784; sequence VGLNNLGNTC…TPYLLFYKKL (704 aa). Catalysis depends on Cys-90, which acts as the Nucleophile. Composition is skewed to basic and acidic residues over residues 232–243 and 252–264; these read KVEEKSLQKEET and DSTRNLDDLKEQL. 2 disordered regions span residues 232 to 341 and 363 to 411; these read KVEE…KINW and TNQR…SSEA. Polar residues predominate over residues 389–407; it reads NTVNGSGPASPGSSVTPVD. At Ser-475 the chain carries Phosphoserine. Residue His-593 is the Proton acceptor of the active site. The segment at 686-723 is disordered; the sequence is PEKVVGTPFTDSRNSETNDTNGTQESDRSKESSDQTGI. Polar residues predominate over residues 694 to 709; the sequence is FTDSRNSETNDTNGTQ. At Ser-767 the chain carries Phosphoserine.

This sequence belongs to the peptidase C19 family. In terms of assembly, interacts with FANCD2 and PCNA. Interacts with WDR48. Interacts with ATAD5; the interaction regulates USP1-mediated PCNA deubiquitination. In terms of processing, autocatalytic cleavage of USP1 following UV irradiation inactivates it, leading to an increase in ubiquitinated PCNA, recruitment of POLH and translesion synthesis. Post-translationally, ubiquitinated by the CRL2(KLHDC2) complex following autocatalytic cleavage, leading to its degradation: the CRL2(KLHDC2) complex recognizes the diglycine (Gly-Gly) at the C-terminus.

Its subcellular location is the nucleus. The catalysed reaction is Thiol-dependent hydrolysis of ester, thioester, amide, peptide and isopeptide bonds formed by the C-terminal Gly of ubiquitin (a 76-residue protein attached to proteins as an intracellular targeting signal).. Negative regulator of DNA damage repair which specifically deubiquitinates monoubiquitinated FANCD2. Also involved in PCNA-mediated translesion synthesis (TLS) by deubiquitinating monoubiquitinated PCNA. Has almost no deubiquitinating activity by itself and requires the interaction with WDR48 to have a high activity. This is Ubiquitin carboxyl-terminal hydrolase 1 from Rattus norvegicus (Rat).